We begin with the raw amino-acid sequence, 118 residues long: Urease subunit beta (118 aa).

The protein belongs to the urease beta subunit family. As to quaternary structure, heterotrimer of UreA (gamma), UreB (beta) and UreC (alpha) subunits. Three heterotrimers associate to form the active enzyme.

Its subcellular location is the cytoplasm. The catalysed reaction is urea + 2 H2O + H(+) = hydrogencarbonate + 2 NH4(+). It participates in nitrogen metabolism; urea degradation; CO(2) and NH(3) from urea (urease route): step 1/1. The protein is Urease subunit beta of Aliivibrio fischeri (strain MJ11) (Vibrio fischeri).